The primary structure comprises 230 residues: Potassium/proton antiporter CemA (230 aa).

The next 4 helical transmembrane spans lie at 7 to 27, 107 to 127, 145 to 165, and 181 to 201; these read LPSL…SSSF, ILHF…FFLG, LNDS…VGFH, and FGWA…PVIL.

The protein belongs to the CemA family.

Its subcellular location is the plastid. The protein resides in the chloroplast inner membrane. It carries out the reaction K(+)(in) + H(+)(out) = K(+)(out) + H(+)(in). Functionally, contributes to K(+)/H(+) antiport activity by supporting proton efflux to control proton extrusion and homeostasis in chloroplasts in a light-dependent manner to modulate photosynthesis. Prevents excessive induction of non-photochemical quenching (NPQ) under continuous-light conditions. Indirectly promotes efficient inorganic carbon uptake into chloroplasts. The polypeptide is Potassium/proton antiporter CemA (Triticum aestivum (Wheat)).